Reading from the N-terminus, the 587-residue chain is Lipoprotein LpqB (587 aa).

Positions 1–19 (MERLMRLTILLFLGAVLAG) are cleaved as a signal peptide. A lipid anchor (N-palmitoyl cysteine) is attached at cysteine 20. The S-diacylglycerol cysteine moiety is linked to residue cysteine 20.

This sequence belongs to the LpqB lipoprotein family.

The protein resides in the cell membrane. This Mycobacterium bovis (strain ATCC BAA-935 / AF2122/97) protein is Lipoprotein LpqB.